The sequence spans 218 residues: Small ribosomal subunit protein uS3 (218 aa).

The region spanning V38 to K106 is the KH type-2 domain.

It belongs to the universal ribosomal protein uS3 family. Part of the 30S ribosomal subunit. Forms a tight complex with proteins S10 and S14.

Functionally, binds the lower part of the 30S subunit head. Binds mRNA in the 70S ribosome, positioning it for translation. This chain is Small ribosomal subunit protein uS3, found in Geobacillus thermodenitrificans (strain NG80-2).